We begin with the raw amino-acid sequence, 932 residues long: MTSLYAPGAEDIRQRLRPFGFFFEKSLKDLIKGIRSHNETPEKLDQFFKQVLSECREEVNSPDLNSKTNAVLKLTYLEMYGFDMAWCNFHILEVMSSNKLQQKRVGYLAASQSFYKDSDILMLATNLLKKDLKYDGNNDVVKVGIALSGLSTIITPSLARDIADDLFTMLNSTRPYIRKKAITALFKVFLQYPEALRDNFDKFVSKLDDDDISVVSAAVSVICELSKKNPQPFIQLSPLLYEILVTIDNNWIIIRLLKLFTNLSQVEPKLRAKLLPKILELMESTVATSVIYESVNCIVKGNMLEEDDFETAMACLERLHTFCDSQDPNLRYISCILFYKIGKINTDFISRFDQLIIRLLSDVDVSIRSKAIELVEGIVDEDNLKAIVQTLMKQFVDEDVVILQTGSIVYEKSKRIPIIIPENYKIKMVNVIISICSADNYSSVNDFEWYNAVIMDLAMLCQDISDKSLGSKIGEQFRNLMIKVPSMREVTIANIIKLISNDNINKQLPTVLRECIWCLGEFSTLVENGNDLIKIMTENISYYSHSVQEVLILALVKVFSNWCNNFQEDKRFEIKMVLKELIEFFENLSYSSTFEVQERSVEVLEFLRLSLEALEEDTEGLPMLLSEVLPSFFNAYELAPIARGTQLKLAVDENLDLETPFLTKEAADELLDEQKSDAISDLMSDISMDEQVELKFVDDSDTSYEEKEKLDDFENPFEIEREKERMSNPYYLGEEDEERTKNSKDLLDLNEEESSDKKPETIRLNRTDNSLNSLSLSTTEISRKKKKGKKKNRVQVLSDEPVIEAAPKRKDAFQKPHDNHSTQNPLKKDKINLRMHSQLENFDFSNFGQSSNAGRGSQEEGNLRKEDELELSRLEANLIVKDEKDNLSDTEEVIVIKKKKKGKKSKSKNKLKTKAKNSPEPNEFLRDQSTDI.

Residue Thr-2 is modified to N-acetylthreonine. HEAT repeat units follow at residues Ser-157–Glu-194, Leu-196–Gln-231, Phe-233–Lys-269, Leu-270–Asp-307, Glu-310–Thr-346, Asp-347–Leu-384, Ala-386–Lys-425, Lys-427–Asp-466, Val-490–Glu-527, Asn-528–Asn-564, Lys-570–Val-601, and Glu-602–Leu-638. Phosphoserine occurs at positions 700 and 727. The disordered stretch occupies residues Glu-720 to Glu-868. Basic and acidic residues-rich tracts occupy residues Glu-738–Leu-747 and Ser-755–Arg-766. Phosphothreonine is present on Thr-767. Over residues Thr-767–Thr-779 the composition is skewed to low complexity. A phosphoserine mark is found at Ser-770 and Ser-773. Over residues Arg-783–Arg-793 the composition is skewed to basic residues. Ser-798 is modified (phosphoserine). A compositionally biased stretch (basic and acidic residues) spans Ala-806 to Asn-832. Over residues Gln-838–Arg-855 the composition is skewed to polar residues. The segment covering Ser-857 to Glu-868 has biased composition (basic and acidic residues). Residues Gln-858–Leu-878 are a coiled coil. Ser-888 is modified (phosphoserine). Residues Lys-897 to Ala-915 show a composition bias toward basic residues. The tract at residues Lys-897–Ile-932 is disordered. A Phosphoserine modification is found at Ser-918. Residues Glu-923–Ile-932 show a composition bias toward basic and acidic residues.

The protein belongs to the adaptor complexes large subunit family. Adaptor protein complex 3 (AP-3) is a heterotetramer composed of 2 large adaptins (APL5 and APL6), a medium adaptin (APM3) and a small adaptin (APS3). Interacts with VPS41.

It is found in the golgi apparatus. The protein localises to the cytoplasmic vesicle. The protein resides in the clathrin-coated vesicle membrane. Functionally, part of the AP-3 complex, an adaptor-related complex which is not clathrin-associated. The complex is associated with the Golgi region as well as more peripheral structures. It facilitates the budding of vesicles from the Golgi membrane and may be directly involved in trafficking to the vacuole. Required for the transport via the ALP pathway, which directs the transport of the cargo proteins PHO8 and VAM3 to the vacuole. The chain is AP-3 complex subunit delta (APL5) from Saccharomyces cerevisiae (strain ATCC 204508 / S288c) (Baker's yeast).